The primary structure comprises 401 residues: MTQMLTRPDVDLVNGMFYADGGAREAYRWMRANEPVFRDRNGLAAATTYQAVLDAERNPELFSSTGGIRPDQPGMPYMIDMDDPQHLLRRKLVNAGFTRKRVMDKVDSIGRLCDTLIDAVCERGECDFVRDIAAPLPMAVIGDMLGVLPTERDMLLKWSDDLVCGLSSHVDEAAIQKLMDTFAAYTEFTKDVITKRRAEPTDDLFSVLVNSEVEGQRMSDDEIVFETLLILIGGDETTRHTLSGGTEQLLRHRDQWDALVADVDLLPGAIEEMLRWTSPVKNMCRTLTADTVFHGTELRAGEKIMLMFESANFDESVFGDPDNFRIDRNPNSHVAFGFGTHFCLGNQLARLELRLMTERVLRRLPDLRLADDAPVPLRPANFVSGPESMPVVFTPSAPVLA.

C343 provides a ligand contact to heme.

Belongs to the cytochrome P450 family. Heme serves as cofactor.

The enzyme catalyses cholest-4-en-3-one + 6 reduced [2Fe-2S]-[ferredoxin] + 3 O2 + 5 H(+) = (25R)-3-oxocholest-4-en-26-oate + 6 oxidized [2Fe-2S]-[ferredoxin] + 4 H2O. It participates in steroid metabolism; cholesterol degradation. Involved in the utilization of cholesterol as the sole carbon and energy source by degrading the side chain. Primarily catalyzes the sequential oxidation of the terminal methyl of cholest-4-en-3-one into (25R)-26-hydroxycholest-4-en-3-one (alcohol), (25R)-26-oxocholest-4-en-3-one (aldehyde), to finally yield the carboxylic acid (25R)-3-oxocholest-4-en-26-oate. Also able to sequentially oxidize cholesterol itself, not only cholest-4-en-3-one. In Mycolicibacterium smegmatis (strain ATCC 700084 / mc(2)155) (Mycobacterium smegmatis), this protein is Steroid C26-monooxygenase.